Reading from the N-terminus, the 192-residue chain is tRNA (pseudouridine(54)-N(1))-methyltransferase (192 aa).

The S-adenosyl-L-methionine site is built by leucine 114 and glycine 138.

Belongs to the methyltransferase superfamily. TrmY family. Homodimer.

The protein localises to the cytoplasm. The enzyme catalyses pseudouridine(54) in tRNA + S-adenosyl-L-methionine = N(1)-methylpseudouridine(54) in tRNA + S-adenosyl-L-homocysteine + H(+). Specifically catalyzes the N1-methylation of pseudouridine at position 54 (Psi54) in tRNAs. This chain is tRNA (pseudouridine(54)-N(1))-methyltransferase, found in Aeropyrum pernix (strain ATCC 700893 / DSM 11879 / JCM 9820 / NBRC 100138 / K1).